Here is a 1135-residue protein sequence, read N- to C-terminus: Envelopment polyprotein (1135 aa).

A signal peptide spans 1–18 (MIMWGLLLTMILIDFGAS). Residues 19-495 (LRNVYDMKIE…ALLTTFCFGW (477 aa)) are Lumenal-facing. 11 disulfide bridges follow: Cys29–Cys151, Cys63–Cys157, Cys109–Cys128, Cys133–Cys138, Cys175–Cys185, Cys210–Cys247, Cys234–Cys351, Cys376–Cys435, Cys380–Cys389, Cys405–Cys424, and Cys452–Cys475. Asn134 is a glycosylation site (N-linked (GlcNAc...) asparagine; by host). Asn235 and Asn347 each carry an N-linked (GlcNAc...) asparagine; by host glycan. N-linked (GlcNAc...) asparagine; by host glycosylation occurs at Asn399. The helical transmembrane segment at 496-516 (ILILSITLAVLVVLKFFAAIL) threads the bilayer. The interval 516 to 533 (LHNSSQENRFKIILRKIK) is binding to the ribonucleoprotein. Over 517–627 (HNSSQENRFK…LNLFRYKSRC (111 aa)) the chain is Cytoplasmic. 2 CCHC-type zinc fingers span residues 545-565 (CEVC…NLSC) and 570-591 (CPYC…YKVC). Binding to the ribonucleoprotein regions lie at residues 588–605 (YKVC…KKTI), 592–603 (QATHRFRDDLKK), and 611–625 (SPGC…RYKS). The ITAM domain maps to 611-634 (SPGCYRTLNLFRYKSRCYIFTVWV). Phosphotyrosine occurs at positions 615 and 628. A YxxL motif is present at residues 615–618 (YRTL). Residues 628 to 648 (YIFTVWVTLLIIESIMWAASA) form a helical membrane-spanning segment. The Lumenal portion of the chain corresponds to 649 to 1105 (SETVLEPSWN…EWITGIFNGN (457 aa)). 8 disulfide bridges follow: Cys735–Cys770, Cys739–Cys777, Cys751–Cys885, Cys765–Cys896, Cys780–Cys904, Cys806–Cys815, Cys823–Cys832, and Cys863–Cys867. The tract at residues 757–777 (FEYENNWGCNPADCPGIGTGC) is fusion loop. N-linked (GlcNAc...) asparagine; by host glycosylation is present at Asn928. Cystine bridges form between Cys970/Cys1000, Cys993/Cys1045, Cys1010/Cys1015, Cys1046/Cys1051, and Cys1085/Cys1089. Residues 1106–1126 (WIVIVVLVFFFILSLILLSLL) traverse the membrane as a helical segment. A binding to the ribonucleoprotein region spans residues 1122–1135 (LLSLLCPIRKHKRS). The Cytoplasmic portion of the chain corresponds to 1127 to 1135 (CPIRKHKRS).

It belongs to the hantavirus envelope glycoprotein family. In terms of assembly, homodimer. Homotetramer; forms heterotetrameric Gn-Gc spikes in the pre-fusion conformation. Interacts (via C-terminus) with the nucleoprotein. Interacts with host TUFM; this interaction contributes to the virus-induced degradation of mitochondria by autophagy, which leads to degradation of host MAVS and inhibition of type I interferon (IFN) responses. Interacts with host MAP1LC3B; this interaction contributes to the virus-induced degradation of mitochondria by autophagy, which leads to degradation of host MAVS and inhibition of type I interferon (IFN) responses. As to quaternary structure, homodimer. Homotetramer; forms heterotetrameric Gn-Gc spikes in the pre-fusion conformation. Homotrimer; forms homotrimer in the post-fusion conformation at acidic pH. Interacts (via C-terminus) with the nucleoprotein. Post-translationally, envelope polyprotein precursor is quickly cleaved in vivo just after synthesis, presumably by host signal peptidase.

Its subcellular location is the virion membrane. The protein resides in the host cell surface. The protein localises to the host Golgi apparatus membrane. It localises to the host endoplasmic reticulum membrane. It is found in the host mitochondrion. Forms homotetramers with glycoprotein C at the surface of the virion. Attaches the virion to host cell receptors including integrin ITGAV/ITGB3. This attachment induces virion internalization predominantly through clathrin-dependent endocytosis. Mediates the assembly and budding of infectious virus particles through its interaction with the nucleocapsid protein and the viral genome. May dysregulate normal immune and endothelial cell responses through an ITAM motif. Translocates to mitochondria, binds to host TUFM and recruits MAP1LC3B. These interactions induce mitochondrial autophagy and therefore destruction of host MAVS leading to inhibition of type I interferon (IFN) responses. Concomitant breakdown of glycoprotein N is apparently prevented by the nucleoprotein that may inhibit Gn-stimulated autophagosome-lysosome fusion. Interacts with the viral genomic RNA. Functionally, forms homotetramers with glycoprotein N at the surface of the virion. Attaches the virion to host cell receptors including integrin ITGAV/ITGB3. This attachment induces virion internalization predominantly through clathrin-dependent endocytosis. Class II fusion protein that promotes fusion of viral membrane with host endosomal membrane after endocytosis of the virion. This Dobrava-Belgrade orthohantavirus (DOBV) protein is Envelopment polyprotein (GP).